The primary structure comprises 300 residues: GTPase Era (300 aa).

The Era-type G domain maps to 5 to 176; it reads HSGFVCLVGR…IDVLAAALPA (172 aa). Positions 13-20 are G1; sequence GRPNTGKS. Position 13-20 (13-20) interacts with GTP; it reads GRPNTGKS. The interval 39–43 is G2; the sequence is QTTRH. Residues 60 to 63 are G3; the sequence is DTPG. Residues 60–64 and 125–128 each bind GTP; these read DTPGL and TKID. The segment at 125 to 128 is G4; it reads TKID. The interval 155 to 157 is G5; the sequence is VSA. One can recognise a KH type-2 domain in the interval 207–286; the sequence is VRDELPHSLA…YLDLRVKVAK (80 aa).

Belongs to the TRAFAC class TrmE-Era-EngA-EngB-Septin-like GTPase superfamily. Era GTPase family. Monomer.

The protein localises to the cell envelope. It is found in the secreted. The protein resides in the cell wall. In terms of biological role, exhibits GTPase activity. Binds RNA but is probably not involved in ribosome assembly in mycobacteria. This is GTPase Era from Mycobacterium bovis (strain ATCC BAA-935 / AF2122/97).